Consider the following 216-residue polypeptide: Large ribosomal subunit protein uL3 (216 aa).

A disordered region spans residues glycine 119 to arginine 143.

It belongs to the universal ribosomal protein uL3 family. As to quaternary structure, part of the 50S ribosomal subunit. Forms a cluster with proteins L14 and L19.

One of the primary rRNA binding proteins, it binds directly near the 3'-end of the 23S rRNA, where it nucleates assembly of the 50S subunit. The polypeptide is Large ribosomal subunit protein uL3 (Levilactobacillus brevis (strain ATCC 367 / BCRC 12310 / CIP 105137 / JCM 1170 / LMG 11437 / NCIMB 947 / NCTC 947) (Lactobacillus brevis)).